The chain runs to 216 residues: Chloramphenicol acetyltransferase (216 aa).

Catalysis depends on His-189, which acts as the Proton acceptor.

It belongs to the chloramphenicol acetyltransferase family. Homotrimer.

It catalyses the reaction chloramphenicol + acetyl-CoA = chloramphenicol 3-acetate + CoA. In terms of biological role, this enzyme is an effector of chloramphenicol resistance in bacteria. The chain is Chloramphenicol acetyltransferase (cat) from Staphylococcus aureus.